Reading from the N-terminus, the 450-residue chain is MNQTDTSPIRLRRSWNTSEIEALFDEHAGRIDPRIYTDEDLYQLELERVFARSWLLLGHETQIRKPGDYITTYMGEDPVVVVRQKDASIAVFLNQCRHRGMRICRADAGNAKAFTCSYHGWAYDTAGNLVNVPYEAESFACLNKKEWSPLKARVETYKGLIFANWDENAVDLDTYLGEAKFYMDHMLDRTEAGTEAIPGVQKWVIPCNWKFAAEQFCSDMYHAGTTSHLSGILAGLPEDLEMADLAPPTVGKQYRASWGGHGSGFYVGDPNLMLAIMGPKVTSYWTEGPASEKAAERLGSVERGSKLMVEHMTVFPTCSFLPGINTVRTWHPRGPNEVEVWAFTVVDADAPDDIKEEFRRQTLRTFSAGGVFEQDDGENWVEIQHILRGHKARSRPFNAEMSMDQTVDNDPVYPGRISNNVYSEEAARGLYAHWLRMMTSPDWDALKATR.

One can recognise a Rieske domain in the interval 54 to 163 (WLLLGHETQI…VETYKGLIFA (110 aa)). 4 residues coordinate [2Fe-2S] cluster: Cys96, His98, Cys116, and His119. His222 and His228 together coordinate Fe cation.

The protein belongs to the bacterial ring-hydroxylating dioxygenase alpha subunit family. This dioxygenase system consists of four proteins: the two subunits of the hydroxylase component (BnzA and BnzB), a ferredoxin (BnzC) and a ferredoxin reductase (BnzD). The cofactor is [2Fe-2S] cluster. Fe cation serves as cofactor.

The catalysed reaction is benzene + NADH + O2 + H(+) = cis-1,2-dihydrobenzene-1,2-diol + NAD(+). It catalyses the reaction toluene + NADH + O2 + H(+) = (1S,2R)-3-methylcyclohexa-3,5-diene-1,2-diol + NAD(+). The protein operates within aromatic compound metabolism; benzene degradation; catechol from benzene: step 1/2. It participates in xenobiotic degradation; toluene degradation. It functions in the pathway xenobiotic degradation; xylene degradation. Its function is as follows. Catalyzes both the oxidation of benzene and toluene. The polypeptide is Benzene 1,2-dioxygenase subunit alpha (bnzA) (Pseudomonas putida (strain ATCC 700007 / DSM 6899 / JCM 31910 / BCRC 17059 / LMG 24140 / F1)).